Consider the following 401-residue polypeptide: Tryptophan synthase beta chain (401 aa).

An N6-(pyridoxal phosphate)lysine modification is found at K92.

This sequence belongs to the TrpB family. In terms of assembly, tetramer of two alpha and two beta chains. Pyridoxal 5'-phosphate is required as a cofactor.

It carries out the reaction (1S,2R)-1-C-(indol-3-yl)glycerol 3-phosphate + L-serine = D-glyceraldehyde 3-phosphate + L-tryptophan + H2O. Its pathway is amino-acid biosynthesis; L-tryptophan biosynthesis; L-tryptophan from chorismate: step 5/5. In terms of biological role, the beta subunit is responsible for the synthesis of L-tryptophan from indole and L-serine. This chain is Tryptophan synthase beta chain, found in Ruthia magnifica subsp. Calyptogena magnifica.